Consider the following 656-residue polypeptide: DNA ligase (656 aa).

NAD(+)-binding positions include 32-36 (DAVYD) and 81-82 (SL). Catalysis depends on lysine 112, which acts as the N6-AMP-lysine intermediate. Residues arginine 133, glutamate 167, and lysine 306 each coordinate NAD(+). The Zn(2+) site is built by cysteine 400, cysteine 403, cysteine 416, and cysteine 421. In terms of domain architecture, BRCT spans 577–656 (ESSSVFSNKT…ELLKRLKEFD (80 aa)).

The protein belongs to the NAD-dependent DNA ligase family. LigA subfamily. Mg(2+) is required as a cofactor. It depends on Mn(2+) as a cofactor.

It catalyses the reaction NAD(+) + (deoxyribonucleotide)n-3'-hydroxyl + 5'-phospho-(deoxyribonucleotide)m = (deoxyribonucleotide)n+m + AMP + beta-nicotinamide D-nucleotide.. DNA ligase that catalyzes the formation of phosphodiester linkages between 5'-phosphoryl and 3'-hydroxyl groups in double-stranded DNA using NAD as a coenzyme and as the energy source for the reaction. It is essential for DNA replication and repair of damaged DNA. The protein is DNA ligase of Helicobacter pylori (strain Shi470).